The chain runs to 281 residues: 4-diphosphocytidyl-2-C-methyl-D-erythritol kinase (281 aa).

The active site involves K15. 98–108 (PTGAGLGGGSS) provides a ligand contact to ATP. D140 is a catalytic residue.

This sequence belongs to the GHMP kinase family. IspE subfamily.

The enzyme catalyses 4-CDP-2-C-methyl-D-erythritol + ATP = 4-CDP-2-C-methyl-D-erythritol 2-phosphate + ADP + H(+). The protein operates within isoprenoid biosynthesis; isopentenyl diphosphate biosynthesis via DXP pathway; isopentenyl diphosphate from 1-deoxy-D-xylulose 5-phosphate: step 3/6. Functionally, catalyzes the phosphorylation of the position 2 hydroxy group of 4-diphosphocytidyl-2C-methyl-D-erythritol. The protein is 4-diphosphocytidyl-2-C-methyl-D-erythritol kinase of Neisseria meningitidis serogroup A / serotype 4A (strain DSM 15465 / Z2491).